The primary structure comprises 431 residues: Glutamate-1-semialdehyde 2,1-aminomutase (431 aa).

Lysine 265 is modified (N6-(pyridoxal phosphate)lysine).

Belongs to the class-III pyridoxal-phosphate-dependent aminotransferase family. HemL subfamily. As to quaternary structure, homodimer. Pyridoxal 5'-phosphate serves as cofactor.

The protein resides in the cytoplasm. It carries out the reaction (S)-4-amino-5-oxopentanoate = 5-aminolevulinate. The protein operates within porphyrin-containing compound metabolism; protoporphyrin-IX biosynthesis; 5-aminolevulinate from L-glutamyl-tRNA(Glu): step 2/2. In Vibrio parahaemolyticus serotype O3:K6 (strain RIMD 2210633), this protein is Glutamate-1-semialdehyde 2,1-aminomutase.